The sequence spans 401 residues: Probable 2,3-bisphosphoglycerate-independent phosphoglycerate mutase (401 aa).

This sequence belongs to the BPG-independent phosphoglycerate mutase family. A-PGAM subfamily.

The catalysed reaction is (2R)-2-phosphoglycerate = (2R)-3-phosphoglycerate. It functions in the pathway carbohydrate degradation; glycolysis; pyruvate from D-glyceraldehyde 3-phosphate: step 3/5. Functionally, catalyzes the interconversion of 2-phosphoglycerate and 3-phosphoglycerate. In Thermotoga neapolitana (strain ATCC 49049 / DSM 4359 / NBRC 107923 / NS-E), this protein is Probable 2,3-bisphosphoglycerate-independent phosphoglycerate mutase.